We begin with the raw amino-acid sequence, 163 residues long: Jun dimerization protein 2 (163 aa).

Disordered stretches follow at residues 1–20 (MMPG…PGLG) and 58–89 (GKRP…AARC). Lys65 participates in a covalent cross-link: Glycyl lysine isopeptide (Lys-Gly) (interchain with G-Cter in SUMO2). One can recognise a bZIP domain in the interval 72–135 (EERRKRRREK…QQLILMLNRH (64 aa)). The interval 74–96 (RRKRRREKNKVAAARCRNKKKER) is basic motif. The segment at 100 to 128 (LQRESERLELMNAELKTQIEELKQERQQL) is leucine-zipper. At Thr148 the chain carries Phosphothreonine; by MAPK8.

This sequence belongs to the bZIP family. ATF subfamily. As to quaternary structure, forms a homodimer or heterodimer with JUN, JUNB, JUND, CEBPG and ATF2 thereby inhibiting transactivation by JUN, ATF2 and CEBPG. Binds multiple DNA elements such as cAMP-response element (CRE) and TPA response element (TRE) either as homodimer or heterodimer. Interacts with IRF2BP1. Post-translationally, phosphorylation of Thr-148 by MAPK8 in response to different stress conditions such as, UV irradiation, oxidatives stress and anisomycin treatments. In terms of processing, polyubiquitinated; probably by IRF2BP1.

It localises to the nucleus. Its function is as follows. Component of the AP-1 transcription factor that represses transactivation mediated by the Jun family of proteins. Involved in a variety of transcriptional responses associated with AP-1 such as UV-induced apoptosis, cell differentiation, tumorigenesis and antitumogeneris. Can also function as a repressor by recruiting histone deacetylase 3/HDAC3 to the promoter region of JUN. May control transcription via direct regulation of the modification of histones and the assembly of chromatin. This Homo sapiens (Human) protein is Jun dimerization protein 2 (JDP2).